Reading from the N-terminus, the 458-residue chain is ATP synthase subunit beta (458 aa).

148–155 contacts ATP; that stretch reads GGAGVGKT.

It belongs to the ATPase alpha/beta chains family. As to quaternary structure, F-type ATPases have 2 components, CF(1) - the catalytic core - and CF(0) - the membrane proton channel. CF(1) has five subunits: alpha(3), beta(3), gamma(1), delta(1), epsilon(1). CF(0) has three main subunits: a(1), b(2) and c(9-12). The alpha and beta chains form an alternating ring which encloses part of the gamma chain. CF(1) is attached to CF(0) by a central stalk formed by the gamma and epsilon chains, while a peripheral stalk is formed by the delta and b chains.

It localises to the cell inner membrane. It carries out the reaction ATP + H2O + 4 H(+)(in) = ADP + phosphate + 5 H(+)(out). Functionally, produces ATP from ADP in the presence of a proton gradient across the membrane. The catalytic sites are hosted primarily by the beta subunits. In Pseudomonas entomophila (strain L48), this protein is ATP synthase subunit beta.